The primary structure comprises 732 residues: MGRREEMIAKIKELMLQPERIRNIGIAAHIDHGKTTLSDNLLAGAGMISEELAGKQLVLDFDEQEQARGITINAANVSMVHNYEGKDYLINLIDTPGHVDFGGDVTRAMRAIDGVIIVVDAVEGVMPQTETVVRQALREYVKPVLFINKVDRLIRELKLTPQQMMERFSKIIMDVNRLIQRYAPEEYKKKWMVKVEDGSVAFGSAYYNWALSVPFMKRTGVKFNEIIDLTLKGDNRTLRQKAPLHVVVLDMVVRHLPSPIEAQKYRIPHLWEGDISSDIGQAMLNCDPKGKMVMVVTKIIIDKHAGEVATGRVWSGTVKSGQEVYLINTKRKARIQQVGIYMGPERINMEAVPAGNIVAVTGLRDAMAGETVAEEQIEPFEALHYVSEPVVTVAIEAKNVKDLPRLIEALRQLAKEDPTLHVKIDEETGQHLLSGMGELHLEVKLYKLKKDWGIDIEVSEPIVVYRESITKSSPMVEGKSPNRHNRFYIVVEPMPDEIYNAIKEGIIPEGRVKNPKEVAKKLAELGMDYEIARGIVDIYNGNMFIDNTKGVQYLNEVMDLLIDGFHQAMDEGPLAREPVMKVIVRLLDAQVHEDNVHRGPAQIYPAIRTAIHCAMMKSNPVLYEPYQKVIINIPYEYMGAVSREITQRRGQLVDMKQEGEVMTIIAEAPVAEMFGFAGSIRSATSGRALWSTEHAGFKRVPNELAQQIIRQIRQRKGLDPNPPTEKDVCPLF.

The region spanning 19-260 (ERIRNIGIAA…MVVRHLPSPI (242 aa)) is the tr-type G domain. GTP is bound by residues 28-35 (AHIDHGKT), 94-98 (DTPGH), and 148-151 (NKVD). At H597 the chain carries Diphthamide.

Belongs to the TRAFAC class translation factor GTPase superfamily. Classic translation factor GTPase family. EF-G/EF-2 subfamily.

Its subcellular location is the cytoplasm. Catalyzes the GTP-dependent ribosomal translocation step during translation elongation. During this step, the ribosome changes from the pre-translocational (PRE) to the post-translocational (POST) state as the newly formed A-site-bound peptidyl-tRNA and P-site-bound deacylated tRNA move to the P and E sites, respectively. Catalyzes the coordinated movement of the two tRNA molecules, the mRNA and conformational changes in the ribosome. This chain is Elongation factor 2 (fusA), found in Pyrococcus horikoshii (strain ATCC 700860 / DSM 12428 / JCM 9974 / NBRC 100139 / OT-3).